Here is a 535-residue protein sequence, read N- to C-terminus: INSYN2B protein (535 aa).

Disordered stretches follow at residues 23–85 (LVKQ…SFPR), 215–346 (EARE…RSSS), and 360–387 (KLPS…PRQE). The span at 46–59 (KNPTGVTEVNTQTP) shows a compositional bias: polar residues. The span at 219 to 232 (SALSPESSAEESNS) shows a compositional bias: low complexity. 3 stretches are compositionally biased toward polar residues: residues 258 to 269 (CSNTNSSASNMP), 307 to 319 (RTHS…SRSQ), and 361 to 375 (LPSQ…TGVG). Residues 411–448 (DLQGRLQSVEESLHSNQEKIKVLLNVIQDLEKAHALTE) adopt a coiled-coil conformation. Residues 493–528 (LEEAEPTEEAPSPPKSPAEAPVPEKQDLRRKSKKVK) form a disordered region.

The protein belongs to the INSYN2 family.

This is INSYN2B protein (Insyn2b) from Mus musculus (Mouse).